A 288-amino-acid chain; its full sequence is Putative branched-chain-amino-acid aminotransferase (288 aa).

Lys-146 is subject to N6-(pyridoxal phosphate)lysine.

This sequence belongs to the class-IV pyridoxal-phosphate-dependent aminotransferase family. The cofactor is pyridoxal 5'-phosphate.

It catalyses the reaction L-leucine + 2-oxoglutarate = 4-methyl-2-oxopentanoate + L-glutamate. The enzyme catalyses L-isoleucine + 2-oxoglutarate = (S)-3-methyl-2-oxopentanoate + L-glutamate. It carries out the reaction L-valine + 2-oxoglutarate = 3-methyl-2-oxobutanoate + L-glutamate. The protein operates within amino-acid biosynthesis; L-isoleucine biosynthesis; L-isoleucine from 2-oxobutanoate: step 4/4. It participates in amino-acid biosynthesis; L-leucine biosynthesis; L-leucine from 3-methyl-2-oxobutanoate: step 4/4. Its pathway is amino-acid biosynthesis; L-valine biosynthesis; L-valine from pyruvate: step 4/4. Acts on leucine, isoleucine and valine. The sequence is that of Putative branched-chain-amino-acid aminotransferase (ilvE) from Methanocaldococcus jannaschii (strain ATCC 43067 / DSM 2661 / JAL-1 / JCM 10045 / NBRC 100440) (Methanococcus jannaschii).